Here is a 135-residue protein sequence, read N- to C-terminus: Flagellar assembly factor FliW 1 (135 aa).

It belongs to the FliW family. Interacts with translational regulator CsrA and flagellin(s).

Its subcellular location is the cytoplasm. Its function is as follows. Acts as an anti-CsrA protein, binds CsrA and prevents it from repressing translation of its target genes, one of which is flagellin. Binds to flagellin and participates in the assembly of the flagellum. The protein is Flagellar assembly factor FliW 1 of Helicobacter pylori (strain ATCC 700392 / 26695) (Campylobacter pylori).